The chain runs to 195 residues: Protein SYM1 (195 aa).

A run of 4 helical transmembrane segments spans residues 21–39, 55–71, 98–115, and 159–175; these read GIMT…QVGF, AVVY…DSWY, LLFA…MSIL, and LFSV…FLSF.

It belongs to the peroxisomal membrane protein PXMP2/4 family.

It localises to the mitochondrion inner membrane. Functionally, may be involved in cellular response to stress. Required to maintain mitochondrial DNA (mtDNA) integrity and stability. This chain is Protein SYM1 (SYM1), found in Kluyveromyces lactis (strain ATCC 8585 / CBS 2359 / DSM 70799 / NBRC 1267 / NRRL Y-1140 / WM37) (Yeast).